A 662-amino-acid polypeptide reads, in one-letter code: Glycogen debranching enzyme (662 aa).

Asp338 functions as the Nucleophile in the catalytic mechanism. The Proton donor role is filled by Glu373.

The protein belongs to the glycosyl hydrolase 13 family.

The catalysed reaction is Hydrolysis of (1-&gt;6)-alpha-D-glucosidic linkages to branches with degrees of polymerization of three or four glucose residues in limit dextrin.. Its pathway is glycan degradation; glycogen degradation. In terms of biological role, removes maltotriose and maltotetraose chains that are attached by 1,6-alpha-linkage to the limit dextrin main chain, generating a debranched limit dextrin. The polypeptide is Glycogen debranching enzyme (Yersinia pseudotuberculosis serotype I (strain IP32953)).